The sequence spans 310 residues: Phosphoribosylaminoimidazole-succinocarboxamide synthase (310 aa).

The protein belongs to the SAICAR synthetase family.

It carries out the reaction 5-amino-1-(5-phospho-D-ribosyl)imidazole-4-carboxylate + L-aspartate + ATP = (2S)-2-[5-amino-1-(5-phospho-beta-D-ribosyl)imidazole-4-carboxamido]succinate + ADP + phosphate + 2 H(+). Its pathway is purine metabolism; IMP biosynthesis via de novo pathway; 5-amino-1-(5-phospho-D-ribosyl)imidazole-4-carboxamide from 5-amino-1-(5-phospho-D-ribosyl)imidazole-4-carboxylate: step 1/2. The protein is Phosphoribosylaminoimidazole-succinocarboxamide synthase of Xanthomonas axonopodis pv. citri (strain 306).